A 273-amino-acid polypeptide reads, in one-letter code: Phosphonates import ATP-binding protein PhnC (273 aa).

In terms of domain architecture, ABC transporter spans 2-245; the sequence is LRIDKLTKRF…VAREIYGADA (244 aa). Residue 34–41 participates in ATP binding; sequence GRSGAGKS.

Belongs to the ABC transporter superfamily. Phosphonates importer (TC 3.A.1.9.1) family. The complex is composed of two ATP-binding proteins (PhnC), two transmembrane proteins (PhnE) and a solute-binding protein (PhnD).

It is found in the cell inner membrane. The enzyme catalyses phosphonate(out) + ATP + H2O = phosphonate(in) + ADP + phosphate + H(+). Functionally, part of the ABC transporter complex PhnCDE involved in phosphonates import. Responsible for energy coupling to the transport system. The protein is Phosphonates import ATP-binding protein PhnC of Ruegeria pomeroyi (strain ATCC 700808 / DSM 15171 / DSS-3) (Silicibacter pomeroyi).